The chain runs to 140 residues: Large-conductance mechanosensitive channel (140 aa).

2 helical membrane-spanning segments follow: residues 9–29 (AFALKGNVVDLAVGVIIGAAF) and 86–106 (GSFLTIVLNFLILAFIIFLMV).

The protein belongs to the MscL family. Homopentamer.

Its subcellular location is the cell inner membrane. Its function is as follows. Channel that opens in response to stretch forces in the membrane lipid bilayer. May participate in the regulation of osmotic pressure changes within the cell. This Anaeromyxobacter dehalogenans (strain 2CP-1 / ATCC BAA-258) protein is Large-conductance mechanosensitive channel.